The chain runs to 585 residues: Chaperonin GroEL, chloroplastic (585 aa).

ATP contacts are provided by residues 55-58 (TLGP), 113-117 (DGTTT), glycine 442, 507-509 (NAA), and aspartate 523.

The protein belongs to the chaperonin (HSP60) family. As to quaternary structure, forms a cylinder of 14 subunits composed of two heptameric rings stacked back-to-back. Interacts with the co-chaperonin GroES.

Its subcellular location is the plastid. The protein localises to the chloroplast. It catalyses the reaction ATP + H2O + a folded polypeptide = ADP + phosphate + an unfolded polypeptide.. Its function is as follows. Together with its co-chaperonin GroES, plays an essential role in assisting protein folding. The GroEL-GroES system forms a nano-cage that allows encapsulation of the non-native substrate proteins and provides a physical environment optimized to promote and accelerate protein folding. In Pyrenomonas salina, this protein is Chaperonin GroEL, chloroplastic.